A 571-amino-acid polypeptide reads, in one-letter code: 2-succinyl-5-enolpyruvyl-6-hydroxy-3-cyclohexene-1-carboxylate synthase (571 aa).

The protein belongs to the TPP enzyme family. MenD subfamily. In terms of assembly, homodimer. Requires Mg(2+) as cofactor. Mn(2+) is required as a cofactor. The cofactor is thiamine diphosphate.

It carries out the reaction isochorismate + 2-oxoglutarate + H(+) = 5-enolpyruvoyl-6-hydroxy-2-succinyl-cyclohex-3-ene-1-carboxylate + CO2. It participates in quinol/quinone metabolism; 1,4-dihydroxy-2-naphthoate biosynthesis; 1,4-dihydroxy-2-naphthoate from chorismate: step 2/7. It functions in the pathway quinol/quinone metabolism; menaquinone biosynthesis. Catalyzes the thiamine diphosphate-dependent decarboxylation of 2-oxoglutarate and the subsequent addition of the resulting succinic semialdehyde-thiamine pyrophosphate anion to isochorismate to yield 2-succinyl-5-enolpyruvyl-6-hydroxy-3-cyclohexene-1-carboxylate (SEPHCHC). This Lysinibacillus sphaericus (strain C3-41) protein is 2-succinyl-5-enolpyruvyl-6-hydroxy-3-cyclohexene-1-carboxylate synthase.